Reading from the N-terminus, the 457-residue chain is Serine--tRNA ligase (457 aa).

L-serine is bound at residue 252–254 (TAE). Residues 283–285 (RKE) and V299 each bind ATP. E306 lines the L-serine pocket. 370-373 (EVVS) contacts ATP. An L-serine-binding site is contributed by T406.

This sequence belongs to the class-II aminoacyl-tRNA synthetase family. Type-1 seryl-tRNA synthetase subfamily. Homodimer. The tRNA molecule binds across the dimer.

The protein localises to the cytoplasm. It catalyses the reaction tRNA(Ser) + L-serine + ATP = L-seryl-tRNA(Ser) + AMP + diphosphate + H(+). The catalysed reaction is tRNA(Sec) + L-serine + ATP = L-seryl-tRNA(Sec) + AMP + diphosphate + H(+). Its pathway is aminoacyl-tRNA biosynthesis; selenocysteinyl-tRNA(Sec) biosynthesis; L-seryl-tRNA(Sec) from L-serine and tRNA(Sec): step 1/1. Its function is as follows. Catalyzes the attachment of serine to tRNA(Ser). Is also able to aminoacylate tRNA(Sec) with serine, to form the misacylated tRNA L-seryl-tRNA(Sec), which will be further converted into selenocysteinyl-tRNA(Sec). The protein is Serine--tRNA ligase of Thermococcus onnurineus (strain NA1).